The primary structure comprises 168 residues: Phosphopantetheine adenylyltransferase (168 aa).

T9 contributes to the substrate binding site. ATP is bound by residues 9 to 10 (TF) and H17. Positions 41, 73, and 87 each coordinate substrate. ATP is bound by residues 88-90 (GLR), E98, and 123-129 (YQFISGT).

Belongs to the bacterial CoaD family. Homohexamer. Mg(2+) serves as cofactor.

The protein localises to the cytoplasm. The catalysed reaction is (R)-4'-phosphopantetheine + ATP + H(+) = 3'-dephospho-CoA + diphosphate. Its pathway is cofactor biosynthesis; coenzyme A biosynthesis; CoA from (R)-pantothenate: step 4/5. In terms of biological role, reversibly transfers an adenylyl group from ATP to 4'-phosphopantetheine, yielding dephospho-CoA (dPCoA) and pyrophosphate. The protein is Phosphopantetheine adenylyltransferase of Ralstonia nicotianae (strain ATCC BAA-1114 / GMI1000) (Ralstonia solanacearum).